The following is a 357-amino-acid chain: D-alanine--D-alanine ligase (357 aa).

Residues 134–339 (KQLFEHRGLP…YPDLIAKLID (206 aa)) form the ATP-grasp domain. 167 to 222 (NDKLTYPVFVKPANLGSSVGISKCNNEEELKSGIAEAFQFDRKLVIEQGINAREIE) provides a ligand contact to ATP. Residues aspartate 293, glutamate 306, and asparagine 308 each contribute to the Mg(2+) site.

The protein belongs to the D-alanine--D-alanine ligase family. Mg(2+) is required as a cofactor. It depends on Mn(2+) as a cofactor.

The protein resides in the cytoplasm. The enzyme catalyses 2 D-alanine + ATP = D-alanyl-D-alanine + ADP + phosphate + H(+). It participates in cell wall biogenesis; peptidoglycan biosynthesis. Functionally, cell wall formation. This chain is D-alanine--D-alanine ligase, found in Staphylococcus epidermidis (strain ATCC 35984 / DSM 28319 / BCRC 17069 / CCUG 31568 / BM 3577 / RP62A).